A 227-amino-acid polypeptide reads, in one-letter code: uncharacterized protein (227 aa).

It belongs to the flavoredoxin family. FMN serves as cofactor.

This is an uncharacterized protein from Deinococcus radiodurans (strain ATCC 13939 / DSM 20539 / JCM 16871 / CCUG 27074 / LMG 4051 / NBRC 15346 / NCIMB 9279 / VKM B-1422 / R1).